A 466-amino-acid polypeptide reads, in one-letter code: Ankyrin repeat and SOCS box protein 18 (466 aa).

6 ANK repeats span residues 119–148, 151–180, 184–213, 218–247, 251–288, and 292–321; these read ELTT…DPDA, GGRG…DPDL, EGLA…SVQR, GRDT…HVDA, RGET…EADA, and DERS…DAGA. The 59-residue stretch at 405–463 folds into the SOCS box domain; that stretch reads QMHKPFYQSLFALALTPRCLQHLCRCALRRLFGKRCFDLIPLLPLPKPLQNYLLLEPQG.

This sequence belongs to the ankyrin SOCS box (ASB) family.

The protein operates within protein modification; protein ubiquitination. Its function is as follows. May be a substrate-recognition component of a SCF-like ECS (Elongin-Cullin-SOCS-box protein) E3 ubiquitin-protein ligase complex which mediates the ubiquitination and subsequent proteasomal degradation of target proteins. This Homo sapiens (Human) protein is Ankyrin repeat and SOCS box protein 18 (ASB18).